A 620-amino-acid chain; its full sequence is Probable translation initiation factor IF-2 (620 aa).

Over residues 1 to 10 the composition is skewed to acidic residues; that stretch reads MSDTDADADT. Residues 1–29 form a disordered region; sequence MSDTDADADTDAVSTTETSMNADANANAD. Low complexity predominate over residues 11–29; sequence DAVSTTETSMNADANANAD. Positions 33-248 constitute a tr-type G domain; sequence LRTPIVAVLG…VLMGLSQRYM (216 aa). The segment at 42 to 49 is G1; it reads GHVDHGKT. 42 to 49 provides a ligand contact to GTP; that stretch reads GHVDHGKT. The interval 67–71 is G2; that stretch reads AITQH. Residues 104–107 are G3; sequence DTPG. GTP contacts are provided by residues 104–108 and 158–161; these read DTPGH and NKVD. Residues 158–161 form a G4 region; the sequence is NKVD. The segment covering 162-183 has biased composition (polar residues); that stretch reads TTPGWTPTDGSPIQPTYESQPS. Residues 162-185 form a disordered region; that stretch reads TTPGWTPTDGSPIQPTYESQPSAA. Residues 226 to 228 form a G5 region; that stretch reads SAI.

This sequence belongs to the TRAFAC class translation factor GTPase superfamily. Classic translation factor GTPase family. IF-2 subfamily.

Its function is as follows. Function in general translation initiation by promoting the binding of the formylmethionine-tRNA to ribosomes. Seems to function along with eIF-2. This chain is Probable translation initiation factor IF-2, found in Haloquadratum walsbyi (strain DSM 16790 / HBSQ001).